Consider the following 302-residue polypeptide: Syntaxin-17 (302 aa).

Ser2 is subject to N-acetylserine. Residues 2-228 (SEDEEKVKLR…KNLGKAAKYK (227 aa)) lie on the Cytoplasmic side of the membrane. An N6-acetyllysine modification is found at Lys41. Positions 53–123 (EEHINAGRTV…EELKKQFNDE (71 aa)) form a coiled coil. Tyr157 carries the post-translational modification Phosphotyrosine; by ABL1. One can recognise a t-SNARE coiled-coil homology domain in the interval 162 to 224 (IPRDQNAAES…EEGTKNLGKA (63 aa)). The chain crosses the membrane as a helical span at residues 229–249 (LAALPVAGALIGGVVGGPIGL). A necessary and sufficient for localization to autophagosome region spans residues 229-275 (LAALPVAGALIGGVVGGPIGLLAGFKVAGIAAALGGGVLGFTGGKLI). Residues 250-254 (LAGFK) are Lumenal-facing. Residues 255-275 (VAGIAAALGGGVLGFTGGKLI) traverse the membrane as a helical segment. At 276 to 302 (QRRKQKMMEKLASSCPDLPSQTDKKCS) the chain is on the cytoplasmic side. Ser289 is modified (phosphoserine). Residues 299 to 302 (KKCS) carry the Endoplasmic reticulum retention signal motif.

It belongs to the syntaxin family. In terms of assembly, forms a SNARE complex composed of VAMP8, SNAP29 and STX17 involved in fusion of autophagosome with lysosome. May interact with VTI1B. Probably interacts with BET1, SCFD1 and SEC22B. Interacts with PTPN2 and ABL1; involved in STX17 phosphorylation. Interacts with COPB1. Interacts with TMED9 and TMED10; the interaction is direct. Interacts with VAMP7. Interacts with RUBCNL/PACER; promoting targeting of RUBCNL/PACER to autophagosome. Interacts with VAMP8, SNAP29, VPS39 and VPS41; these interactions are increased in the absence of TMEM39A. Interacts with IRGM; promoting STX17 recruitment to autophagosomes. Interacts with ATG8 proteins GABARAP and MAP1LC3B. Interacts with RNF115; this interaction enhances STX17 stability which in turn promotes autophagosome maturation. Interacts with RAB39A (GTP-bound); the interaction promotes autophagosome-lysosome membrane fusion driven by STX17-SNAP29-VAMP8. Interacts with RAB39B; the interaction may promote a different fonction in autophagy as compared with RAB39A. Phosphorylated at Tyr-157 probably by ABL1. Dephosphorylation by PTPN2; regulates exit from the endoplasmic reticulum.

Its subcellular location is the endoplasmic reticulum membrane. The protein localises to the smooth endoplasmic reticulum membrane. It is found in the endoplasmic reticulum-Golgi intermediate compartment membrane. The protein resides in the cytoplasmic vesicle. It localises to the autophagosome membrane. Its subcellular location is the COPII-coated vesicle membrane. The protein localises to the cytoplasm. It is found in the cytosol. The protein resides in the mitochondrion membrane. It localises to the autolysosome membrane. In terms of biological role, SNAREs, soluble N-ethylmaleimide-sensitive factor-attachment protein receptors, are essential proteins for fusion of cellular membranes. SNAREs localized on opposing membranes assemble to form a trans-SNARE complex, an extended, parallel four alpha-helical bundle that drives membrane fusion. STX17 is a SNARE of the autophagosome involved in autophagy through the direct control of autophagosome membrane fusion with the lysosome membrane. May also play a role in the early secretory pathway where it may maintain the architecture of the endoplasmic reticulum-Golgi intermediate compartment/ERGIC and Golgi and/or regulate transport between the endoplasmic reticulum, the ERGIC and the Golgi. The polypeptide is Syntaxin-17 (Bos taurus (Bovine)).